Reading from the N-terminus, the 214-residue chain is MQAGGRRQRRLGVMGGTFDPIHNGHLVAASEVADRFDLDEVVFVPTGQPWQKRARAVTAAEDRYLMTVIATASNPRFTVSRVDIDRGGATYTKDTLRDLRAQNPDADLFFITGADALASILSWQNWEEMFSIARFIGVSRPGYELDGKHISAAMAELPDDALHLIEVPALAISSTDCRIRAEQSRPIWYLVPDGVVQYVAKRNLYRSEGEGVRP.

The protein belongs to the NadD family.

The enzyme catalyses nicotinate beta-D-ribonucleotide + ATP + H(+) = deamido-NAD(+) + diphosphate. It participates in cofactor biosynthesis; NAD(+) biosynthesis; deamido-NAD(+) from nicotinate D-ribonucleotide: step 1/1. In terms of biological role, catalyzes the reversible adenylation of nicotinate mononucleotide (NaMN) to nicotinic acid adenine dinucleotide (NaAD). This Mycolicibacterium vanbaalenii (strain DSM 7251 / JCM 13017 / BCRC 16820 / KCTC 9966 / NRRL B-24157 / PYR-1) (Mycobacterium vanbaalenii) protein is Probable nicotinate-nucleotide adenylyltransferase.